A 587-amino-acid polypeptide reads, in one-letter code: Polyadenylate-binding protein-interacting protein 3 (587 aa).

A Sm domain is found at 51–132 (LLVYFTTCNI…LVQVIAKDLP (82 aa)). The interval 422–503 (AKSENSSGWP…QSPQSPVFDG (82 aa)) is disordered. Residues 431–464 (PGSSISRNSENSAASSASNLPILSPSSSGSLSSE) are compositionally biased toward low complexity. The PAM2-like 1; degenerate motif lies at 467–475 (TLNPNAKEF). The short motif at 476–486 (KLNPNAKSFKP) is the PAM2-like 2 element. Residues 486–498 (PSPSATRPQSPQS) are compositionally biased toward polar residues.

The chain is Polyadenylate-binding protein-interacting protein 3 (CID3) from Arabidopsis thaliana (Mouse-ear cress).